Reading from the N-terminus, the 394-residue chain is Flavohemoprotein (394 aa).

Positions 1-136 (MLSENTINIV…LANVFIQREE (136 aa)) constitute a Globin domain. Position 85 (histidine 85) interacts with heme b. Catalysis depends on charge relay system residues tyrosine 95 and glutamate 135. Residues 147-394 (GGWRGLREFE…YECFGPHKVV (248 aa)) are reductase. Residues 150–255 (RGLREFELVE…AAPAGDFFLD (106 aa)) enclose the FAD-binding FR-type domain. Residues tyrosine 188 and 204 to 207 (RQYS) each bind FAD. Residue 268–273 (GVGLTP) coordinates NADP(+). 387–390 (CFGP) contributes to the FAD binding site.

The protein belongs to the globin family. Two-domain flavohemoproteins subfamily. In the C-terminal section; belongs to the flavoprotein pyridine nucleotide cytochrome reductase family. The cofactor is heme b. It depends on FAD as a cofactor.

It catalyses the reaction 2 nitric oxide + NADPH + 2 O2 = 2 nitrate + NADP(+) + H(+). It carries out the reaction 2 nitric oxide + NADH + 2 O2 = 2 nitrate + NAD(+) + H(+). In terms of biological role, is involved in NO detoxification in an aerobic process, termed nitric oxide dioxygenase (NOD) reaction that utilizes O(2) and NAD(P)H to convert NO to nitrate, which protects the bacterium from various noxious nitrogen compounds. Therefore, plays a central role in the inducible response to nitrosative stress. In Vibrio vulnificus (strain CMCP6), this protein is Flavohemoprotein.